Reading from the N-terminus, the 141-residue chain is Nucleoside triphosphatase NudI (141 aa).

The region spanning 1 to 141 (MRQRTIVCPL…RVTLSQKGLL (141 aa)) is the Nudix hydrolase domain. A Nudix box motif is present at residues 38 to 59 (GGVEPVERIEEALRREIREELG).

It belongs to the Nudix hydrolase family. NudI subfamily. Monomer. The cofactor is Mg(2+).

The enzyme catalyses a ribonucleoside 5'-triphosphate + H2O = a ribonucleoside 5'-phosphate + diphosphate + H(+). The catalysed reaction is a 2'-deoxyribonucleoside 5'-triphosphate + H2O = a 2'-deoxyribonucleoside 5'-phosphate + diphosphate + H(+). It carries out the reaction dUTP + H2O = dUMP + diphosphate + H(+). It catalyses the reaction dTTP + H2O = dTMP + diphosphate + H(+). The enzyme catalyses dCTP + H2O = dCMP + diphosphate + H(+). Its function is as follows. Catalyzes the hydrolysis of nucleoside triphosphates, with a preference for pyrimidine deoxynucleoside triphosphates (dUTP, dTTP and dCTP). In Klebsiella pneumoniae (strain 342), this protein is Nucleoside triphosphatase NudI.